A 189-amino-acid polypeptide reads, in one-letter code: MPTPTKGPRLGGGPAHERLMLANLAAALFEHKRITTTVTKAKRLKPYAERLVTFAKRGDLASRRRVLGLISDKGVVHELFTDIAGAVANRDGGYTRITKIGNRKGDNAPMAVIELVLEPVSPKQAVVAEATAAASKAAPAAEEEVVETEEAPAVEAEAAESEEAPAAEAEAAEAEAAETEEAPAAEDKK.

Residues 136–189 form a disordered region; it reads KAAPAAEEEVVETEEAPAVEAEAAESEEAPAAEAEAAEAEAAETEEAPAAEDKK. Residues 141-189 are compositionally biased toward acidic residues; the sequence is AEEEVVETEEAPAVEAEAAESEEAPAAEAEAAEAEAAETEEAPAAEDKK.

It belongs to the bacterial ribosomal protein bL17 family. In terms of assembly, part of the 50S ribosomal subunit. Contacts protein L32.

The sequence is that of Large ribosomal subunit protein bL17 from Paenarthrobacter aurescens (strain TC1).